Reading from the N-terminus, the 720-residue chain is Protein O-mannosyl-transferase 1 (720 aa).

8 consecutive transmembrane segments (helical) span residues P7 to F27, F67 to W87, L105 to L125, Y127 to V147, R150 to L170, S178 to V198, M201 to I221, and F239 to T259. MIR domains lie at P291–P354, P365–V422, and S426–H486. Helical transmembrane passes span I570–Y590, L609–L629, T633–V653, and A670–S690.

It belongs to the glycosyltransferase 39 family. As to expression, widely expressed. Has particularly strong expression in testis, ovary, brain, liver and heart.

It localises to the endoplasmic reticulum membrane. The catalysed reaction is a di-trans,poly-cis-dolichyl beta-D-mannosyl phosphate + L-seryl-[protein] = 3-O-(alpha-D-mannosyl)-L-seryl-[protein] + a di-trans,poly-cis-dolichyl phosphate + H(+). It catalyses the reaction a di-trans,poly-cis-dolichyl beta-D-mannosyl phosphate + L-threonyl-[protein] = 3-O-(alpha-D-mannosyl)-L-threonyl-[protein] + a di-trans,poly-cis-dolichyl phosphate + H(+). It functions in the pathway protein modification; protein glycosylation. Transfers mannosyl residues to the hydroxyl group of serine or threonine residues. Coexpression of both POMT1 and POMT2 is necessary for enzyme activity, expression of either POMT1 or POMT2 alone is insufficient. This Danio rerio (Zebrafish) protein is Protein O-mannosyl-transferase 1.